Here is a 530-residue protein sequence, read N- to C-terminus: Bifunctional purine biosynthesis protein PurH (530 aa).

The 148-residue stretch at 1-148 (MNNARPIRRA…KNHKDVTIVV (148 aa)) folds into the MGS-like domain.

It belongs to the PurH family.

It catalyses the reaction (6R)-10-formyltetrahydrofolate + 5-amino-1-(5-phospho-beta-D-ribosyl)imidazole-4-carboxamide = 5-formamido-1-(5-phospho-D-ribosyl)imidazole-4-carboxamide + (6S)-5,6,7,8-tetrahydrofolate. The enzyme catalyses IMP + H2O = 5-formamido-1-(5-phospho-D-ribosyl)imidazole-4-carboxamide. Its pathway is purine metabolism; IMP biosynthesis via de novo pathway; 5-formamido-1-(5-phospho-D-ribosyl)imidazole-4-carboxamide from 5-amino-1-(5-phospho-D-ribosyl)imidazole-4-carboxamide (10-formyl THF route): step 1/1. The protein operates within purine metabolism; IMP biosynthesis via de novo pathway; IMP from 5-formamido-1-(5-phospho-D-ribosyl)imidazole-4-carboxamide: step 1/1. The polypeptide is Bifunctional purine biosynthesis protein PurH (Aliivibrio fischeri (strain ATCC 700601 / ES114) (Vibrio fischeri)).